The primary structure comprises 616 residues: Pentatricopeptide repeat-containing protein At4g15720 (616 aa).

PPR repeat units follow at residues 63–93 (DTFT…MCEP), 94–128 (NVVS…RPVP), 130–164 (NEYT…GLRR), 165–199 (NIVV…GRNV), 200–228 (VSWT…FNAA), 235–269 (NQFM…GYES), 270–300 (NTVV…IRCH), 301–335 (SVIS…RINP), 336–371 (NYVT…GVVP), and 372–402 (DSRH…IEVG). The segment at 409-484 (LWGALLSAGR…ERACSWIENK (76 aa)) is type E motif. The interval 485–515 (DSVYVFHAGDLSCDESGEIERFLKDLEKRMK) is type E(+) motif. The type DYW motif stretch occupies residues 522-616 (SSSMITTSSS…NGSCTCRDYW (95 aa)).

It belongs to the PPR family. PCMP-H subfamily.

This Arabidopsis thaliana (Mouse-ear cress) protein is Pentatricopeptide repeat-containing protein At4g15720 (PCMP-H1).